The sequence spans 270 residues: Interleukin-33 (270 aa).

The tract at residues 1-65 is homeodomain-like HTH domain; that stretch reads MKPKMKYSTN…EACYFRRETT (65 aa). Residues 1-94 constitute a propeptide that is removed on maturation; that stretch reads MKPKMKYSTN…CQQQSTVECF (94 aa). The segment at 64–111 is interaction with RELA; it reads TTKRPSLKTGRKHKRHLVLAACQQQSTVECFAFGISGVQKYTRALHDS.

Belongs to the IL-1 family. Highly divergent. Forms a 1:1:1 heterotrimeric complex with its primary high-affinity receptor IL1RL1 and the coreceptor IL1RAP. Interacts with cargo receptor TMED10; the interaction mediates the translocation from the cytoplasm into the ERGIC (endoplasmic reticulum-Golgi intermediate compartment) and thereby secretion. In terms of assembly, (Microbial infection) Interacts (in reduced form) with H.polygyrus ARI. The full-length protein can be released from cells and is able to signal via the IL1RL1/ST2 receptor. However, proteolytic processing by CELA1, CSTG/cathepsin G and ELANE/neutrophil elastase produces C-terminal peptides that are more active than the unprocessed full length protein. May also be proteolytically processed by calpains. Proteolytic cleavage mediated by apoptotic caspases including CASP3 and CASP7 results in IL33 inactivation. In vitro proteolytic cleavage by CASP1 was reported but could not be confirmed in vivo suggesting that IL33 is probably not a direct substrate for that caspase. As to expression, expressed at high level in high endothelial venules found in tonsils, Peyer patches and mesenteric lymph nodes. Almost undetectable in placenta.

The protein localises to the nucleus. The protein resides in the chromosome. It localises to the cytoplasm. It is found in the cytoplasmic vesicle. Its subcellular location is the secretory vesicle. The protein localises to the secreted. Functionally, cytokine that binds to and signals through the IL1RL1/ST2 receptor which in turn activates NF-kappa-B and MAPK signaling pathways in target cells. Involved in the maturation of Th2 cells inducing the secretion of T-helper type 2-associated cytokines. Also involved in activation of mast cells, basophils, eosinophils and natural killer cells. Acts as an enhancer of polarization of alternatively activated macrophages. Acts as a chemoattractant for Th2 cells, and may function as an 'alarmin', that amplifies immune responses during tissue injury. Induces rapid UCP2-dependent mitochondrial rewiring that attenuates the generation of reactive oxygen species and preserves the integrity of Krebs cycle required for persistent production of itaconate and subsequent GATA3-dependent differentiation of inflammation-resolving alternatively activated macrophages. In quiescent endothelia the uncleaved form is constitutively and abundantly expressed, and acts as a chromatin-associated nuclear factor with transcriptional repressor properties, it may sequester nuclear NF-kappaB/RELA, lowering expression of its targets. This form is rapidely lost upon angiogenic or pro-inflammatory activation. In Homo sapiens (Human), this protein is Interleukin-33.